We begin with the raw amino-acid sequence, 38 residues long: Large ribosomal subunit protein bL36 (38 aa).

Belongs to the bacterial ribosomal protein bL36 family.

In Azotobacter vinelandii (strain DJ / ATCC BAA-1303), this protein is Large ribosomal subunit protein bL36.